The chain runs to 2492 residues: Transcriptional regulator ATRX (2492 aa).

A disordered region spans residues 1–146 (MTAEPMSESK…DKDDFKGPEF (146 aa)). Residue Lys10 forms a Glycyl lysine isopeptide (Lys-Gly) (interchain with G-Cter in SUMO2) linkage. The span at 17-27 (KLHDFLAHSSE) shows a compositional bias: basic and acidic residues. Phosphoserine occurs at positions 25 and 34. Residues 40-57 (MNQNTDKISGSGSNSDMM) are compositionally biased toward polar residues. The segment covering 58 to 72 (ENSKEEGTSSSEKSK) has biased composition (basic and acidic residues). Phosphotyrosine is present on Tyr89. Ser92 and Ser112 each carry phosphoserine. The segment covering 92-108 (SDDEKPLDDETVNEDAS) has biased composition (acidic residues). A compositionally biased stretch (basic and acidic residues) spans 135–146 (NEDKDDFKGPEF). Residues Lys138 and Lys142 each participate in a glycyl lysine isopeptide (Lys-Gly) (interchain with G-Cter in SUMO2) cross-link. The 138-residue stretch at 159–296 (KRGEDGLHGI…LEQLLQQNKK (138 aa)) folds into the ADD domain. A GATA-type; atypical zinc finger spans residues 170–206 (SCTACGQQVNHFQKDSIYRHPSLQVLICKNCFKYYMS). At Ser213 the chain carries Phosphoserine. Residues 217 to 272 (DEQCRWCAEGGNLICCDFCHNAFCKKCILRNLGRKELSTIMDENNQWYCYICHPEP) form a PHD-type; atypical zinc finger. Lys299 is covalently cross-linked (Glycyl lysine isopeptide (Lys-Gly) (interchain with G-Cter in SUMO2)). Residue Ser316 is modified to Phosphoserine. Lys438 participates in a covalent cross-link: Glycyl lysine isopeptide (Lys-Gly) (interchain with G-Cter in SUMO2). Residues 445-502 (KGEKPCALEKKDISKSEAKLSRKQVDSEHMDQNVPTEEQRANKSTGGEHKKSDRKEEP) are compositionally biased toward basic and acidic residues. Residues 445-614 (KGEKPCALEK…CQEVPQDKDG (170 aa)) form a disordered region. The segment covering 550–567 (SGTEQEVESSSVKLNISS) has biased composition (polar residues). A PxVxL motif motif is present at residues 581 to 594 (KVTKELYVKLTPVS). Thr591 is subject to Phosphothreonine. Ser594 and Ser598 each carry phosphoserine. Lys623 participates in a covalent cross-link: Glycyl lysine isopeptide (Lys-Gly) (interchain with G-Cter in SUMO1); alternate. Residue Lys623 forms a Glycyl lysine isopeptide (Lys-Gly) (interchain with G-Cter in SUMO2); alternate linkage. Ser634 is subject to Phosphoserine. The disordered stretch occupies residues 648 to 1479 (LEESDLRRSP…SKSPGKGRKK (832 aa)). Thr674 is subject to Phosphothreonine. Phosphoserine occurs at positions 675, 677, 729, and 731. The span at 755–777 (NEIHTNHKTLYDLKTQAGKDDKG) shows a compositional bias: basic and acidic residues. Residues Ser784, Ser819, Ser849, Ser850, Ser875, and Ser876 each carry the phosphoserine modification. The segment covering 843–864 (NTKDFDSSEDEKHSKKGMDNQG) has biased composition (basic and acidic residues). Positions 878 to 887 (DAERKQEREN) are enriched in basic and acidic residues. Ser889 is modified (phosphoserine). Composition is skewed to basic and acidic residues over residues 894–909 (TVDK…DRLP) and 920–944 (GVDK…ETKE). The segment covering 945-955 (KSKHLKTKTCK) has biased composition (basic residues). A Phosphoserine modification is found at Ser962. The span at 964–1004 (TAEKFLKKDQSDETSEDDKKQSKKGTEEKKKPSDFKKKVIK) shows a compositional bias: basic and acidic residues. Residue Lys967 is modified to N6-acetyllysine. The residue at position 974 (Ser974) is a Phosphoserine. At Thr977 the chain carries Phosphothreonine. Lys1004 participates in a covalent cross-link: Glycyl lysine isopeptide (Lys-Gly) (interchain with G-Cter in SUMO2). Phosphoserine occurs at positions 1011, 1012, and 1013. Residues 1015-1027 (GTEKLPEREEICH) are compositionally biased toward basic and acidic residues. Over residues 1045–1055 (KSKKIRDKTSK) the composition is skewed to basic residues. The span at 1056 to 1082 (KKDELSDYAEKSTGKGDSCDSSEDKKS) shows a compositional bias: basic and acidic residues. Position 1061 is a phosphoserine (Ser1061). Tyr1063 carries the phosphotyrosine modification. Basic residues predominate over residues 1090–1102 (EKKRCKLLGKSSR). The segment covering 1103–1139 (KRQDCSSSDTEKYSMKEDGCNSSDKRLKRIELRERRN) has biased composition (basic and acidic residues). The segment covering 1168–1195 (KQQRTSSKKKAVIVKEKKRNSLRTSTKR) has biased composition (basic residues). The tract at residues 1189-1326 (LRTSTKRKQA…KNQVNSESDS (138 aa)) is interaction with DAXX. Residues 1233–1246 (LVLSSHTGFCQSSG) show a composition bias toward polar residues. 3 positions are modified to phosphoserine: Ser1244, Ser1245, and Ser1253. Residues 1267–1281 (PENRIAKKMLLEEIK) are compositionally biased toward basic and acidic residues. The segment covering 1286 to 1297 (SDEDGSSDDEPE) has biased composition (acidic residues). Residues 1298 to 1308 (EGKKRTGKQNE) are compositionally biased toward basic and acidic residues. Ser1322, Ser1324, and Ser1326 each carry phosphoserine. The segment covering 1334 to 1345 (PRYRHRLLRHKL) has biased composition (basic residues). 2 positions are modified to phosphoserine: Ser1348 and Ser1352. 2 stretches are compositionally biased toward basic and acidic residues: residues 1353–1368 (GEEK…EVKG) and 1408–1417 (KKAELEENQR). The span at 1419–1428 (YKQKKKRRRI) shows a compositional bias: basic residues. Residues 1443 to 1468 (EEEEEEKEEEEEEEEEEEEEEEDEND) show a composition bias toward acidic residues. Lys1488 participates in a covalent cross-link: Glycyl lysine isopeptide (Lys-Gly) (interchain with G-Cter in SUMO2). Ser1527 is subject to Phosphoserine. At Thr1529 the chain carries Phosphothreonine. A Helicase ATP-binding domain is found at 1581–1768 (KTKKSPGSGC…HCMVNFIKEN (188 aa)). 1594–1601 (HCMGLGKT) contacts ATP. Residues 1719–1722 (DEGH) carry the DEGH box motif. Phosphoserine is present on residues Ser1906 and Ser1913. A disordered region spans residues 1913–2000 (SDSDETSMSL…SSNPSSPAPD (88 aa)). The segment covering 1929-1938 (KKKKKGKKGK) has biased composition (basic residues). Lys1982 participates in a covalent cross-link: Glycyl lysine isopeptide (Lys-Gly) (interchain with G-Cter in SUMO1); alternate. A Glycyl lysine isopeptide (Lys-Gly) (interchain with G-Cter in SUMO2); alternate cross-link involves residue Lys1982. Lys1987 is covalently cross-linked (Glycyl lysine isopeptide (Lys-Gly) (interchain with G-Cter in SUMO2)). The span at 1990–1999 (SSSNPSSPAP) shows a compositional bias: low complexity. Ser1992 and Ser1996 each carry phosphoserine. Positions 2010–2280 (DAEVLEHSGK…RKAAWAEYEA (271 aa)) are interaction with MECP2. The Helicase C-terminal domain maps to 2025–2205 (EILRMAEEIG…ERHFTMNELT (181 aa)). Residue Ser2220 is modified to Phosphoserine. Residues 2462–2492 (PVAGGMQPPPLQRAPPPMRSKNPGPSQGKSM) form a disordered region. Residues 2468-2479 (QPPPLQRAPPPM) show a composition bias toward pro residues. Omega-N-methylarginine is present on residues Arg2474 and Arg2480.

The protein belongs to the SNF2/RAD54 helicase family. In terms of assembly, interacts with DAXX to form the chromatin remodeling complex ATRX:DAXX. Probably binds EZH2. Binds annexin V in a calcium and phosphatidylcholine/phosphatidylserine-dependent manner. Interacts directly with CBX5 via the PxVxL motif. Interacts with RAD50, MRE11 and NBN; indicative for an association with the MRN complex. Interacts with histone MACROH2A1. Interacts with histone H3 peptides methylated at 'Lys-10' with preferences H3K9me3 &gt; H3K9me2 &gt; H3K9me1. Interacts with histone H3 peptides unmethylated at 'Lys-5' (H3K4me0). Interacts with MECP2, SMC1 and SMC3. Interacts with SETDB1, TRIM28 and ZNF274.

The protein localises to the nucleus. Its subcellular location is the chromosome. It localises to the telomere. The protein resides in the PML body. The enzyme catalyses ATP + H2O = ADP + phosphate + H(+). Functionally, involved in transcriptional regulation and chromatin remodeling. Facilitates DNA replication in multiple cellular environments and is required for efficient replication of a subset of genomic loci. Binds to DNA tandem repeat sequences in both telomeres and euchromatin and in vitro binds DNA quadruplex structures. May help stabilizing G-rich regions into regular chromatin structures by remodeling G4 DNA and incorporating H3.3-containing nucleosomes. Catalytic component of the chromatin remodeling complex ATRX:DAXX which has ATP-dependent DNA translocase activity and catalyzes the replication-independent deposition of histone H3.3 in pericentric DNA repeats outside S-phase and telomeres, and the in vitro remodeling of H3.3-containing nucleosomes. Its heterochromatin targeting is proposed to involve a combinatorial readout of histone H3 modifications (specifically methylation states of H3K9 and H3K4) and association with CBX5. Involved in maintaining telomere structural integrity in embryonic stem cells which probably implies recruitment of CBX5 to telomeres. May be involved in transcriptional regulation of telomeric repeat-containing RNA (TERRA). Acts as a negative regulator of chromatin incorporation of transcriptionally repressive histone MACROH2A1, particularily at telomeres. Participates in the allele-specific gene expression at the imprinted IGF2/H19 gene locus. On the maternal allele, required for the chromatin occupancy of SMC1 and CTCTF within the H19 imprinting control region (ICR) and involved in esatblishment of histone tails modifications in the ICR. May be involved in brain development and facial morphogenesis. Binds to zinc-finger coding genes with atypical chromatin signatures and regulates its H3K9me3 levels. Forms a complex with ZNF274, TRIM28 and SETDB1 to facilitate the deposition and maintenance of H3K9me3 at the 3' exons of zinc-finger genes. In Pan troglodytes (Chimpanzee), this protein is Transcriptional regulator ATRX (ATRX).